Consider the following 102-residue polypeptide: Small ribosomal subunit protein uS10 (102 aa).

Belongs to the universal ribosomal protein uS10 family. Part of the 30S ribosomal subunit.

Involved in the binding of tRNA to the ribosomes. The sequence is that of Small ribosomal subunit protein uS10 from Dehalococcoides mccartyi (strain ATCC BAA-2266 / KCTC 15142 / 195) (Dehalococcoides ethenogenes (strain 195)).